Here is a 138-residue protein sequence, read N- to C-terminus: SHSKHHATYVKGANDAVAKLEEARAQEDFSSILLSEKNLAFNLAGHVNHTIWWKNLSPNGGDKPTGELAAAIDDAFGSFDTFSAQFHAASTTVQGSGWAALGWDTLGNKLLIFQVYDHQTNFPLGIVPLLLLDMWEHA.

The Mn(2+) site is built by H2, H49, D133, and H137.

This sequence belongs to the iron/manganese superoxide dismutase family. Mn(2+) serves as cofactor.

The catalysed reaction is 2 superoxide + 2 H(+) = H2O2 + O2. Functionally, destroys superoxide anion radicals which are normally produced within the cells and which are toxic to biological systems. The protein is Superoxide dismutase [Mn] (sodA) of Mycobacterium szulgai.